Consider the following 240-residue polypeptide: tRNA (guanine-N(1)-)-methyltransferase (240 aa).

S-adenosyl-L-methionine-binding positions include Gly-108 and 127–132 (LGDFIL).

Belongs to the RNA methyltransferase TrmD family. In terms of assembly, homodimer.

The protein localises to the cytoplasm. It carries out the reaction guanosine(37) in tRNA + S-adenosyl-L-methionine = N(1)-methylguanosine(37) in tRNA + S-adenosyl-L-homocysteine + H(+). Its function is as follows. Specifically methylates guanosine-37 in various tRNAs. The protein is tRNA (guanine-N(1)-)-methyltransferase of Streptococcus mutans serotype c (strain ATCC 700610 / UA159).